The chain runs to 378 residues: TelA-like protein SAB1262 (378 aa).

Belongs to the TelA family.

The sequence is that of TelA-like protein SAB1262 from Staphylococcus aureus (strain bovine RF122 / ET3-1).